The sequence spans 395 residues: S-adenosylmethionine synthase 5 (395 aa).

A Mg(2+)-binding site is contributed by Glu10. His16 is a binding site for ATP. A K(+)-binding site is contributed by Glu44. L-methionine-binding residues include Glu57 and Gln100. Residues Asp168–Lys170, Ser236–Phe239, Asp247, Arg253–Lys254, Ala270, Lys274, and Lys278 each bind ATP. Asp247 lines the L-methionine pocket. Lys278 contributes to the L-methionine binding site.

Belongs to the AdoMet synthase family. As to quaternary structure, homotetramer. It depends on Mn(2+) as a cofactor. Requires Mg(2+) as cofactor. Co(2+) is required as a cofactor. K(+) serves as cofactor.

The protein resides in the cytoplasm. The catalysed reaction is L-methionine + ATP + H2O = S-adenosyl-L-methionine + phosphate + diphosphate. The protein operates within amino-acid biosynthesis; S-adenosyl-L-methionine biosynthesis; S-adenosyl-L-methionine from L-methionine: step 1/1. Functionally, catalyzes the formation of S-adenosylmethionine from methionine and ATP. The reaction comprises two steps that are both catalyzed by the same enzyme: formation of S-adenosylmethionine (AdoMet) and triphosphate, and subsequent hydrolysis of the triphosphate. This chain is S-adenosylmethionine synthase 5 (METK5), found in Populus trichocarpa (Western balsam poplar).